A 256-amino-acid chain; its full sequence is Small ribosomal subunit protein eS1 (256 aa).

A2 carries the post-translational modification N-acetylalanine; partial.

It belongs to the eukaryotic ribosomal protein eS1 family. Component of the small ribosomal subunit. Mature ribosomes consist of a small (40S) and a large (60S) subunit. The 40S subunit contains about 33 different proteins and 1 molecule of RNA (18S). The 60S subunit contains about 49 different proteins and 3 molecules of RNA (25S, 5.8S and 5S).

The protein localises to the cytoplasm. This Sclerotinia sclerotiorum (strain ATCC 18683 / 1980 / Ss-1) (White mold) protein is Small ribosomal subunit protein eS1 (rps1).